A 228-amino-acid chain; its full sequence is 7-cyano-7-deazaguanine synthase (228 aa).

8–18 (LSGGLDSTTCL) serves as a coordination point for ATP. 4 residues coordinate Zn(2+): Cys188, Cys198, Cys201, and Cys204.

It belongs to the QueC family. Requires Zn(2+) as cofactor.

It carries out the reaction 7-carboxy-7-deazaguanine + NH4(+) + ATP = 7-cyano-7-deazaguanine + ADP + phosphate + H2O + H(+). The protein operates within purine metabolism; 7-cyano-7-deazaguanine biosynthesis. In terms of biological role, catalyzes the ATP-dependent conversion of 7-carboxy-7-deazaguanine (CDG) to 7-cyano-7-deazaguanine (preQ(0)). The polypeptide is 7-cyano-7-deazaguanine synthase (Legionella pneumophila (strain Paris)).